A 187-amino-acid polypeptide reads, in one-letter code: Shikimate kinase (187 aa).

19 to 24 contacts ATP; sequence GSGKST. Ser-23 lines the Mg(2+) pocket. Residues Asp-41, Arg-65, and Gly-87 each contribute to the substrate site. Arg-124 serves as a coordination point for ATP. Position 143 (Arg-143) interacts with substrate. Arg-160 lines the ATP pocket.

It belongs to the shikimate kinase family. In terms of assembly, monomer. The cofactor is Mg(2+).

The protein localises to the cytoplasm. It carries out the reaction shikimate + ATP = 3-phosphoshikimate + ADP + H(+). Its pathway is metabolic intermediate biosynthesis; chorismate biosynthesis; chorismate from D-erythrose 4-phosphate and phosphoenolpyruvate: step 5/7. Functionally, catalyzes the specific phosphorylation of the 3-hydroxyl group of shikimic acid using ATP as a cosubstrate. This is Shikimate kinase from Rippkaea orientalis (strain PCC 8801 / RF-1) (Cyanothece sp. (strain PCC 8801)).